The sequence spans 55 residues: Large ribosomal subunit protein bL33 (55 aa).

It belongs to the bacterial ribosomal protein bL33 family.

This Jannaschia sp. (strain CCS1) protein is Large ribosomal subunit protein bL33.